The following is a 128-amino-acid chain: MPKSVIIPAGSSAPLAPFVPGTLADGVVYVSGTLAFDQHNNVLFADDPKAQTRHVLETIRKVIETAGGTMADVTFNSIFITDWKNYAAINEIYAEFFPGDKPARFYIQCGLVKPDALVEIATIAHIAK.

It belongs to the RutC family. Homotrimer.

It carries out the reaction (Z)-3-aminoacrylate + H2O + H(+) = 3-oxopropanoate + NH4(+). Functionally, involved in pyrimidine catabolism. Catalyzes the deamination of 3-aminoacrylate to malonic semialdehyde, a reaction that can also occur spontaneously. RutC may facilitate the reaction and modulate the metabolic fitness, rather than catalyzing essential functions. This is 3-aminoacrylate deaminase RutC from Shigella flexneri serotype X (strain 2002017).